Reading from the N-terminus, the 369-residue chain is Phenylalanine--tRNA ligase alpha subunit (369 aa).

Mg(2+) is bound at residue E269.

This sequence belongs to the class-II aminoacyl-tRNA synthetase family. Phe-tRNA synthetase alpha subunit type 1 subfamily. In terms of assembly, tetramer of two alpha and two beta subunits. Requires Mg(2+) as cofactor.

The protein localises to the cytoplasm. The catalysed reaction is tRNA(Phe) + L-phenylalanine + ATP = L-phenylalanyl-tRNA(Phe) + AMP + diphosphate + H(+). In Brucella abortus (strain 2308), this protein is Phenylalanine--tRNA ligase alpha subunit.